The primary structure comprises 58 residues: Mitochondrial import receptor subunit TOM7 homolog (58 aa).

Topologically, residues 1 to 16 are cytoplasmic; that stretch reads MKLSPATKSFIGKTVD. The helical transmembrane segment at 17–35 threads the bilayer; it reads ISTFAIQWGFVPFVVYLGF. At 36 to 58 the chain is on the mitochondrial intermembrane side; the sequence is KKGAEPMPNGQILPLSAMSLLWG.

This sequence belongs to the Tom7 family. Forms part of the preprotein translocase complex of the outer mitochondrial membrane (TOM complex).

It localises to the mitochondrion outer membrane. In Caenorhabditis elegans, this protein is Mitochondrial import receptor subunit TOM7 homolog (tomm-7).